A 388-amino-acid chain; its full sequence is Protein RecA (388 aa).

79–86 (GPESSGKT) is a binding site for ATP. The disordered stretch occupies residues 347 to 388 (IDGEEVSEQDTENKKDEPKKEEAVNEEVPLDLGDELEIEIEE). Residues 357–369 (TENKKDEPKKEEA) are compositionally biased toward basic and acidic residues. Residues 370–388 (VNEEVPLDLGDELEIEIEE) are compositionally biased toward acidic residues.

It belongs to the RecA family.

The protein resides in the cytoplasm. Functionally, can catalyze the hydrolysis of ATP in the presence of single-stranded DNA, the ATP-dependent uptake of single-stranded DNA by duplex DNA, and the ATP-dependent hybridization of homologous single-stranded DNAs. It interacts with LexA causing its activation and leading to its autocatalytic cleavage. The chain is Protein RecA from Streptococcus pneumoniae (strain Hungary19A-6).